The primary structure comprises 150 residues: MNDGGKRFYLVDGDILPEAILKTALVNEMLAKGEVTKVSEAVEKVGLSRSAYYKYKDGVLPFREPGRSNIVSVSLLLEHHPGILSRVLNTVAAMEGNILTINQSVPEKGLAPVAFVLDRSRMSVDLPRLLAELRQLTGVRSAQLVGSEEE.

The ACT domain occupies serine 72–serine 147.

Belongs to the UPF0735 family.

This Heliobacterium modesticaldum (strain ATCC 51547 / Ice1) protein is UPF0735 ACT domain-containing protein Helmi_18680.